Here is a 203-residue protein sequence, read N- to C-terminus: Protein S40-6 (203 aa).

The disordered stretch occupies residues 1 to 33; sequence MAKGRKPTTMNRSDRYLGSYTYGDSHGNSVTDE.

Belongs to the senescence regulator S40 family.

Its subcellular location is the cytoplasm. The protein is Protein S40-6 of Arabidopsis thaliana (Mouse-ear cress).